Consider the following 457-residue polypeptide: tRNA-2-methylthio-N(6)-dimethylallyladenosine synthase (457 aa).

In terms of domain architecture, MTTase N-terminal spans 3–120 (KKVYVKTFGC…LPQMIDARRA (118 aa)). C12, C49, C83, C157, C161, and C164 together coordinate [4Fe-4S] cluster. Residues 143-377 (RVEGPSAFVS…QATIEENVAR (235 aa)) enclose the Radical SAM core domain. Positions 380–447 (QSMVGKVERI…PHSLRGELLL (68 aa)) constitute a TRAM domain.

The protein belongs to the methylthiotransferase family. MiaB subfamily. In terms of assembly, monomer. [4Fe-4S] cluster serves as cofactor.

The protein localises to the cytoplasm. The enzyme catalyses N(6)-dimethylallyladenosine(37) in tRNA + (sulfur carrier)-SH + AH2 + 2 S-adenosyl-L-methionine = 2-methylsulfanyl-N(6)-dimethylallyladenosine(37) in tRNA + (sulfur carrier)-H + 5'-deoxyadenosine + L-methionine + A + S-adenosyl-L-homocysteine + 2 H(+). Functionally, catalyzes the methylthiolation of N6-(dimethylallyl)adenosine (i(6)A), leading to the formation of 2-methylthio-N6-(dimethylallyl)adenosine (ms(2)i(6)A) at position 37 in tRNAs that read codons beginning with uridine. This chain is tRNA-2-methylthio-N(6)-dimethylallyladenosine synthase, found in Burkholderia vietnamiensis (strain G4 / LMG 22486) (Burkholderia cepacia (strain R1808)).